A 658-amino-acid polypeptide reads, in one-letter code: Glycogen debranching enzyme (658 aa).

D336 serves as the catalytic Nucleophile. The active-site Proton donor is the E371. A disordered region spans residues 459 to 484 (EANGEENRDGTNSNYSDNHGKEGLGG).

It belongs to the glycosyl hydrolase 13 family.

The catalysed reaction is Hydrolysis of (1-&gt;6)-alpha-D-glucosidic linkages to branches with degrees of polymerization of three or four glucose residues in limit dextrin.. It participates in glycan degradation; glycogen degradation. In terms of biological role, removes maltotriose and maltotetraose chains that are attached by 1,6-alpha-linkage to the limit dextrin main chain, generating a debranched limit dextrin. This Salmonella enteritidis PT4 (strain P125109) protein is Glycogen debranching enzyme.